Consider the following 403-residue polypeptide: Phosphoglycerate kinase (403 aa).

Substrate contacts are provided by residues D21–N23, R36, H59–R62, R119, and R154. Residues K207, G299, E330, and G357–A360 contribute to the ATP site.

The protein belongs to the phosphoglycerate kinase family. As to quaternary structure, monomer.

It is found in the cytoplasm. It catalyses the reaction (2R)-3-phosphoglycerate + ATP = (2R)-3-phospho-glyceroyl phosphate + ADP. Its pathway is carbohydrate degradation; glycolysis; pyruvate from D-glyceraldehyde 3-phosphate: step 2/5. The polypeptide is Phosphoglycerate kinase (Chlamydia abortus (strain DSM 27085 / S26/3) (Chlamydophila abortus)).